Reading from the N-terminus, the 107-residue chain is Anti-adapter protein IraM (107 aa).

The protein belongs to the IraM/RssC family.

The protein resides in the cytoplasm. Inhibits RpoS proteolysis by regulating RssB activity, thereby increasing the stability of the sigma stress factor RpoS during magnesium starvation. The polypeptide is Anti-adapter protein IraM (Shigella dysenteriae serotype 1 (strain Sd197)).